A 202-amino-acid polypeptide reads, in one-letter code: Dephospho-CoA kinase (202 aa).

In terms of domain architecture, DPCK spans 4–201 (VIGLTGGIAS…QKYLAMSKQN (198 aa)). 12-17 (ASGKTT) serves as a coordination point for ATP.

Belongs to the CoaE family.

The protein resides in the cytoplasm. The enzyme catalyses 3'-dephospho-CoA + ATP = ADP + CoA + H(+). Its pathway is cofactor biosynthesis; coenzyme A biosynthesis; CoA from (R)-pantothenate: step 5/5. Its function is as follows. Catalyzes the phosphorylation of the 3'-hydroxyl group of dephosphocoenzyme A to form coenzyme A. In Vibrio vulnificus (strain YJ016), this protein is Dephospho-CoA kinase.